Here is a 329-residue protein sequence, read N- to C-terminus: Endonuclease 8-like 2 (329 aa).

Catalysis depends on Pro-2, which acts as the Schiff-base intermediate with DNA. Glu-3 functions as the Proton donor in the catalytic mechanism. Lys-50 (proton donor; for beta-elimination activity) is an active-site residue. Position 50 is an N6-acetyllysine (Lys-50). Residue Ser-68 is modified to Phosphoserine. The segment at 88–112 is disordered; sequence GPSAQEPSAGPSGSGEPVPSRSAET. Position 150 is an N6-acetyllysine (Lys-150). Position 227 (Asn-227) interacts with DNA. The FPG-type zinc finger occupies 280–316; the sequence is QIYQKEQCPSGHQVMKETFGPPDGLQRLTWWCPQCQP. The active-site Proton donor; for delta-elimination activity is the Arg-306.

This sequence belongs to the FPG family. As to quaternary structure, binds EP300.

It localises to the nucleus. The catalysed reaction is 2'-deoxyribonucleotide-(2'-deoxyribose 5'-phosphate)-2'-deoxyribonucleotide-DNA = a 3'-end 2'-deoxyribonucleotide-(2,3-dehydro-2,3-deoxyribose 5'-phosphate)-DNA + a 5'-end 5'-phospho-2'-deoxyribonucleoside-DNA + H(+). Acetylation of Lys-50 leads to loss of DNA nicking activity. Functionally, involved in base excision repair of DNA damaged by oxidation or by mutagenic agents. Has DNA glycosylase activity towards 5-hydroxyuracil and other oxidized derivatives of cytosine with a preference for mismatched double-stranded DNA (DNA bubbles). Has low or no DNA glycosylase activity towards thymine glycol, 2-hydroxyadenine, hypoxanthine and 8-oxoguanine. Has AP (apurinic/apyrimidinic) lyase activity and introduces nicks in the DNA strand. Cleaves the DNA backbone by beta-delta elimination to generate a single-strand break at the site of the removed base with both 3'- and 5'-phosphates. This chain is Endonuclease 8-like 2 (Neil2), found in Mus musculus (Mouse).